A 198-amino-acid polypeptide reads, in one-letter code: Glycerol-3-phosphate acyltransferase (198 aa).

Helical transmembrane passes span Y2–L22, L48–I70, M75–L97, V111–I131, and I154–F174.

Belongs to the PlsY family. In terms of assembly, probably interacts with PlsX.

It localises to the cell membrane. It carries out the reaction an acyl phosphate + sn-glycerol 3-phosphate = a 1-acyl-sn-glycero-3-phosphate + phosphate. The protein operates within lipid metabolism; phospholipid metabolism. Functionally, catalyzes the transfer of an acyl group from acyl-phosphate (acyl-PO(4)) to glycerol-3-phosphate (G3P) to form lysophosphatidic acid (LPA). This enzyme utilizes acyl-phosphate as fatty acyl donor, but not acyl-CoA or acyl-ACP. The chain is Glycerol-3-phosphate acyltransferase from Thermoanaerobacter pseudethanolicus (strain ATCC 33223 / 39E) (Clostridium thermohydrosulfuricum).